The primary structure comprises 790 residues: Penicillin-binding protein 1A (790 aa).

The Cytoplasmic segment spans residues 1 to 6 (MYKSLF). A helical; Signal-anchor for type II membrane protein membrane pass occupies residues 7-27 (FCLKIFAVLILVGCGITAYII). Residues 28-790 (YHYSRDLPDY…SKEDQSQEIY (763 aa)) are Periplasmic-facing. Residues 49–220 (TRIYSHDGKL…SELNPERNYA (172 aa)) are transglycosylase. The active-site Proton donor; for transglycosylase activity is the E87. The transpeptidase stretch occupies residues 398–711 (DVIVVEPIKD…SNVVLPIFID (314 aa)). Residue S457 is the Acyl-ester intermediate; for transpeptidase activity of the active site.

The protein in the N-terminal section; belongs to the glycosyltransferase 51 family. It in the C-terminal section; belongs to the transpeptidase family.

It localises to the cell inner membrane. The enzyme catalyses [GlcNAc-(1-&gt;4)-Mur2Ac(oyl-L-Ala-gamma-D-Glu-L-Lys-D-Ala-D-Ala)](n)-di-trans,octa-cis-undecaprenyl diphosphate + beta-D-GlcNAc-(1-&gt;4)-Mur2Ac(oyl-L-Ala-gamma-D-Glu-L-Lys-D-Ala-D-Ala)-di-trans,octa-cis-undecaprenyl diphosphate = [GlcNAc-(1-&gt;4)-Mur2Ac(oyl-L-Ala-gamma-D-Glu-L-Lys-D-Ala-D-Ala)](n+1)-di-trans,octa-cis-undecaprenyl diphosphate + di-trans,octa-cis-undecaprenyl diphosphate + H(+). The catalysed reaction is Preferential cleavage: (Ac)2-L-Lys-D-Ala-|-D-Ala. Also transpeptidation of peptidyl-alanyl moieties that are N-acyl substituents of D-alanine.. It functions in the pathway cell wall biogenesis; peptidoglycan biosynthesis. Cell wall formation. Synthesis of cross-linked peptidoglycan from the lipid intermediates. The enzyme has a penicillin-insensitive transglycosylase N-terminal domain (formation of linear glycan strands) and a penicillin-sensitive transpeptidase C-terminal domain (cross-linking of the peptide subunits). In Rickettsia felis (strain ATCC VR-1525 / URRWXCal2) (Rickettsia azadi), this protein is Penicillin-binding protein 1A (mrcA).